The chain runs to 469 residues: Sulfate adenylyltransferase subunit 1 (469 aa).

Positions 22-236 constitute a tr-type G domain; sequence KDMLRFLTCG…TLENIEIGND (215 aa). The segment at 31-38 is G1; that stretch reads GSVDDGKS. 31–38 is a binding site for GTP; that stretch reads GSVDDGKS. The tract at residues 89-93 is G2; sequence GITID. The segment at 110–113 is G3; that stretch reads DTPG. GTP is bound by residues 110-114 and 165-168; these read DTPGH and NKMD. Residues 165 to 168 form a G4 region; it reads NKMD. Residues 202–204 are G5; that stretch reads SAL.

The protein belongs to the TRAFAC class translation factor GTPase superfamily. Classic translation factor GTPase family. CysN/NodQ subfamily. As to quaternary structure, heterodimer composed of CysD, the smaller subunit, and CysN.

The enzyme catalyses sulfate + ATP + H(+) = adenosine 5'-phosphosulfate + diphosphate. It functions in the pathway sulfur metabolism; hydrogen sulfide biosynthesis; sulfite from sulfate: step 1/3. In terms of biological role, with CysD forms the ATP sulfurylase (ATPS) that catalyzes the adenylation of sulfate producing adenosine 5'-phosphosulfate (APS) and diphosphate, the first enzymatic step in sulfur assimilation pathway. APS synthesis involves the formation of a high-energy phosphoric-sulfuric acid anhydride bond driven by GTP hydrolysis by CysN coupled to ATP hydrolysis by CysD. The chain is Sulfate adenylyltransferase subunit 1 from Pseudoalteromonas atlantica (strain T6c / ATCC BAA-1087).